Here is a 472-residue protein sequence, read N- to C-terminus: 6-phosphogluconate dehydrogenase, decarboxylating (472 aa).

NADP(+) is bound by residues 10–15 (GMAVMG), 33–35 (NRT), 74–76 (VQA), and N102. Substrate-binding positions include N102 and 128 to 130 (SGG). K184 functions as the Proton acceptor in the catalytic mechanism. Residue 187–188 (HN) coordinates substrate. The Proton donor role is filled by E191. Residues Y192, K262, R289, R447, and H453 each contribute to the substrate site.

This sequence belongs to the 6-phosphogluconate dehydrogenase family. In terms of assembly, homodimer.

The enzyme catalyses 6-phospho-D-gluconate + NADP(+) = D-ribulose 5-phosphate + CO2 + NADPH. It participates in carbohydrate degradation; pentose phosphate pathway; D-ribulose 5-phosphate from D-glucose 6-phosphate (oxidative stage): step 3/3. Its function is as follows. Catalyzes the oxidative decarboxylation of 6-phosphogluconate to ribulose 5-phosphate and CO(2), with concomitant reduction of NADP to NADPH. The sequence is that of 6-phosphogluconate dehydrogenase, decarboxylating (gnd) from Lactococcus lactis subsp. cremoris (strain MG1363).